The primary structure comprises 460 residues: UDP-N-acetylmuramoyl-tripeptide--D-alanyl-D-alanine ligase (460 aa).

An ATP-binding site is contributed by 115 to 121 (GSSGKTS).

It belongs to the MurCDEF family. MurF subfamily.

Its subcellular location is the cytoplasm. The catalysed reaction is D-alanyl-D-alanine + UDP-N-acetyl-alpha-D-muramoyl-L-alanyl-gamma-D-glutamyl-meso-2,6-diaminopimelate + ATP = UDP-N-acetyl-alpha-D-muramoyl-L-alanyl-gamma-D-glutamyl-meso-2,6-diaminopimeloyl-D-alanyl-D-alanine + ADP + phosphate + H(+). It participates in cell wall biogenesis; peptidoglycan biosynthesis. Its function is as follows. Involved in cell wall formation. Catalyzes the final step in the synthesis of UDP-N-acetylmuramoyl-pentapeptide, the precursor of murein. In Buchnera aphidicola subsp. Baizongia pistaciae (strain Bp), this protein is UDP-N-acetylmuramoyl-tripeptide--D-alanyl-D-alanine ligase.